The sequence spans 372 residues: Glutamate 5-kinase (372 aa).

Lysine 14 contacts ATP. The substrate site is built by serine 54, aspartate 141, and asparagine 153. 173–174 (TD) lines the ATP pocket. The PUA domain maps to 280–358 (RGRVIIDAGA…SEIESVLGHL (79 aa)).

It belongs to the glutamate 5-kinase family.

The protein resides in the cytoplasm. It catalyses the reaction L-glutamate + ATP = L-glutamyl 5-phosphate + ADP. The protein operates within amino-acid biosynthesis; L-proline biosynthesis; L-glutamate 5-semialdehyde from L-glutamate: step 1/2. Its function is as follows. Catalyzes the transfer of a phosphate group to glutamate to form L-glutamate 5-phosphate. The protein is Glutamate 5-kinase of Cupriavidus metallidurans (strain ATCC 43123 / DSM 2839 / NBRC 102507 / CH34) (Ralstonia metallidurans).